The chain runs to 486 residues: Photosystem II CP43 reaction center protein (486 aa).

The propeptide occupies 1–28 (MKVFVHGWQHKISHTRILYSLRRFYHVE). The next 5 helical transmembrane spans lie at 82-106 (LFEVAHFIPEKPLYEQGFILIPHLA), 147-168 (LIGPDTLEESFPFFGYDWRDKN), 191-213 (KALFFGGVYDTWAPGGGDVRLIN), 268-288 (KPFAWARRAFVWSGEAYLSYS), and 304-325 (WYNNTAYPSEFYGPTGPEASQA). Glu380 lines the [CaMn4O5] cluster pocket. The chain crosses the membrane as a helical span at residues 460-484 (RARAAAAGFEKGINRENEAVLSMRP).

Belongs to the PsbB/PsbC family. PsbC subfamily. In terms of assembly, PSII is composed of 1 copy each of membrane proteins PsbA, PsbB, PsbC, PsbD, PsbE, PsbF, PsbH, PsbI, PsbJ, PsbK, PsbL, PsbM, PsbT, PsbX, PsbY, PsbZ, Psb30/Ycf12, at least 3 peripheral proteins of the oxygen-evolving complex and a large number of cofactors. It forms dimeric complexes. Binds multiple chlorophylls and provides some of the ligands for the Ca-4Mn-5O cluster of the oxygen-evolving complex. It may also provide a ligand for a Cl- that is required for oxygen evolution. PSII binds additional chlorophylls, carotenoids and specific lipids. is required as a cofactor.

It localises to the plastid. The protein localises to the chloroplast thylakoid membrane. Functionally, one of the components of the core complex of photosystem II (PSII). It binds chlorophyll and helps catalyze the primary light-induced photochemical processes of PSII. PSII is a light-driven water:plastoquinone oxidoreductase, using light energy to abstract electrons from H(2)O, generating O(2) and a proton gradient subsequently used for ATP formation. The chain is Photosystem II CP43 reaction center protein from Gracilaria tenuistipitata var. liui (Red alga).